The primary structure comprises 140 residues: Arsenate reductase (140 aa).

Residue Cys11 is the Nucleophile; cysteine thioarsenate intermediate of the active site.

Belongs to the ArsC family.

The catalysed reaction is [glutaredoxin]-dithiol + arsenate + glutathione + H(+) = glutathionyl-S-S-[glutaredoxin] + arsenite + H2O. Involved in resistance to arsenate. Catalyzes the reduction of arsenate [As(V)] to arsenite [As(III)]. The resulting arsenite is then extruded from the cell via the aquaglyceroporin AqpS. Does not display antimonate reductase activity. The sequence is that of Arsenate reductase from Rhizobium meliloti (strain 1021) (Ensifer meliloti).